The chain runs to 593 residues: Insulin-like growth factor 2 mRNA-binding protein 3-B (593 aa).

2 RRM domains span residues 2–75 (NKLY…HSVP) and 81–156 (RKLQ…YIPD). A disordered region spans residues 159 to 208 (ATPQSPSQQLQQPQQQHPQGRRGFGQRGPARQGSPGAAARPKPQSEVPLR). The span at 161 to 176 (PQSPSQQLQQPQQQHP) shows a compositional bias: low complexity. KH domains follow at residues 204-269 (EVPL…CKII) and 285-352 (EIPL…EEEV). The segment covering 390-402 (SGMPPPSAGVSSP) has biased composition (low complexity). Residues 390–412 (SGMPPPSAGVSSPTTSASYPPFG) are disordered. 2 consecutive KH domains span residues 417–482 (SETV…QGRI) and 499–565 (KLEA…QRKI). The tract at residues 571–593 (QVRRQQQQQQKTAQSGQPQPRRK) is disordered.

This sequence belongs to the RRM IMP/VICKZ family. In terms of assembly, homodimer and multimer. Associates with microtubules. Interaction with a translocation machinery protein TRAPA of the endoplasmic reticulum. Component of a mRNP complex, at least composed of DAZAP1, IGF2BP3, STAU and VgRBP60. The mRNP complex with DAZAP1, IGF2BP3, STAU and VgRBP60 is only found in the cytoplasm. Interacts with a hnRNP 1 related RNA transport protein VgRBP60 both in the nucleus (in an RNA-independent manner) and the cytoplasm (in an RNA-dependent manner). Found in a B3 activator complex. As to expression, expressed in oocytes, kidney and pancreas (at protein level). Expressed in oocytes, kidney and pancreas.

The protein localises to the nucleus. Its subcellular location is the cytoplasm. It localises to the endoplasmic reticulum. Its function is as follows. RNA-binding protein that acts as a regulator of mRNA transport and localization. Binds to the RNA sequence motif 5'-UUCAC-3'. Preferentially binds to N6-methyladenosine (m6A)-containing mRNAs and increases their stability. Mediates the specific association of Vg1 RNA to microtubules. May regulate mRNA translation. Binds specifically to the vegetal localization elements (VLE or VgLE) in the 3'-UTR of Vg1 and VegT mRNAs. Binds to the Vg1 and VegT mRNAs in both the nucleus and the cytoplasm. May regulate mRNA translation. Acts as a transcription regulator. Binds to the 5'-[TA]GGTTACT-3' motif within element 3 of the TFIIIA gene promoter. The chain is Insulin-like growth factor 2 mRNA-binding protein 3-B (igf2bp3-b) from Xenopus laevis (African clawed frog).